A 95-amino-acid chain; its full sequence is Sec-independent protein translocase protein TatA (95 aa).

Residues 1-21 (MGGISIWQLLIIALIVVLLFG) form a helical membrane-spanning segment. The segment covering 50–61 (KALEDNAADKPA) has biased composition (basic and acidic residues). Residues 50-95 (KALEDNAADKPAADAAKVTETAKVAETAPVAETAEKKAESKGKEQA) form a disordered region. A compositionally biased stretch (low complexity) spans 62–81 (ADAAKVTETAKVAETAPVAE). A compositionally biased stretch (basic and acidic residues) spans 82–95 (TAEKKAESKGKEQA).

Belongs to the TatA/E family. The Tat system comprises two distinct complexes: a TatABC complex, containing multiple copies of TatA, TatB and TatC subunits, and a separate TatA complex, containing only TatA subunits. Substrates initially bind to the TatABC complex, which probably triggers association of the separate TatA complex to form the active translocon.

It is found in the cell inner membrane. Functionally, part of the twin-arginine translocation (Tat) system that transports large folded proteins containing a characteristic twin-arginine motif in their signal peptide across membranes. TatA could form the protein-conducting channel of the Tat system. In Shewanella halifaxensis (strain HAW-EB4), this protein is Sec-independent protein translocase protein TatA.